The chain runs to 108 residues: Probable chaperone-like protein YdbL (108 aa).

The signal sequence occupies residues 1 to 21 (MKKTLLLCAFLVGLVSSNVMA).

Its subcellular location is the periplasm. Its function is as follows. Probably acts as a chaperone-like protein that contributes to, but is not required for, the formation of the YdbH-YnbE intermembrane bridge. Affects the function and the structure of the YdbH-YnbE complex. Overexpression of ydbL causes a negative effect on YdbH-YnbE function. The polypeptide is Probable chaperone-like protein YdbL (ydbL) (Escherichia coli (strain K12)).